Reading from the N-terminus, the 452-residue chain is tRNA modification GTPase MnmE (452 aa).

Residues Arg24, Glu81, and Arg120 each coordinate (6S)-5-formyl-5,6,7,8-tetrahydrofolate. A TrmE-type G domain is found at 216-373 (GIKTVIVGAP…LFGAIGRWAD (158 aa)). GTP contacts are provided by residues 226 to 231 (NVGKSS), 245 to 251 (SAEPGTT), and 270 to 273 (DTAG). 2 residues coordinate Mg(2+): Ser230 and Thr251. Lys452 serves as a coordination point for (6S)-5-formyl-5,6,7,8-tetrahydrofolate.

It belongs to the TRAFAC class TrmE-Era-EngA-EngB-Septin-like GTPase superfamily. TrmE GTPase family. As to quaternary structure, homodimer. Heterotetramer of two MnmE and two MnmG subunits. Requires K(+) as cofactor.

Its subcellular location is the cytoplasm. Its function is as follows. Exhibits a very high intrinsic GTPase hydrolysis rate. Involved in the addition of a carboxymethylaminomethyl (cmnm) group at the wobble position (U34) of certain tRNAs, forming tRNA-cmnm(5)s(2)U34. The protein is tRNA modification GTPase MnmE of Opitutus terrae (strain DSM 11246 / JCM 15787 / PB90-1).